We begin with the raw amino-acid sequence, 427 residues long: Light-independent protochlorophyllide reductase subunit N (427 aa).

[4Fe-4S] cluster is bound by residues Cys30, Cys55, and Cys116.

The protein belongs to the BchN/ChlN family. In terms of assembly, protochlorophyllide reductase is composed of three subunits; BchL, BchN and BchB. Forms a heterotetramer of two BchB and two BchN subunits. Requires [4Fe-4S] cluster as cofactor.

It catalyses the reaction chlorophyllide a + oxidized 2[4Fe-4S]-[ferredoxin] + 2 ADP + 2 phosphate = protochlorophyllide a + reduced 2[4Fe-4S]-[ferredoxin] + 2 ATP + 2 H2O. Its pathway is porphyrin-containing compound metabolism; bacteriochlorophyll biosynthesis (light-independent). In terms of biological role, component of the dark-operative protochlorophyllide reductase (DPOR) that uses Mg-ATP and reduced ferredoxin to reduce ring D of protochlorophyllide (Pchlide) to form chlorophyllide a (Chlide). This reaction is light-independent. The NB-protein (BchN-BchB) is the catalytic component of the complex. The sequence is that of Light-independent protochlorophyllide reductase subunit N from Rhodopseudomonas palustris (strain BisA53).